The sequence spans 352 residues: Histidinol-phosphate aminotransferase (352 aa).

N6-(pyridoxal phosphate)lysine is present on lysine 216.

It belongs to the class-II pyridoxal-phosphate-dependent aminotransferase family. Histidinol-phosphate aminotransferase subfamily. The cofactor is pyridoxal 5'-phosphate.

The enzyme catalyses L-histidinol phosphate + 2-oxoglutarate = 3-(imidazol-4-yl)-2-oxopropyl phosphate + L-glutamate. Its pathway is amino-acid biosynthesis; L-histidine biosynthesis; L-histidine from 5-phospho-alpha-D-ribose 1-diphosphate: step 7/9. This Methanoculleus marisnigri (strain ATCC 35101 / DSM 1498 / JR1) protein is Histidinol-phosphate aminotransferase.